Reading from the N-terminus, the 328-residue chain is Cytochrome c biogenesis protein CcsA (328 aa).

The next 8 helical transmembrane spans lie at 13 to 33 (ISFS…LVNL), 46 to 66 (GIVI…IYSG), 73 to 93 (LYES…VSYF), 101 to 121 (LNAI…SGLL), 146 to 166 (MILG…LLVI), 234 to 254 (IISL…VWAN), 263 to 283 (WDPK…YLHI), and 295 to 315 (AIVA…VNLL).

The protein belongs to the CcmF/CycK/Ccl1/NrfE/CcsA family. May interact with Ccs1.

Its subcellular location is the plastid. It localises to the chloroplast thylakoid membrane. Required during biogenesis of c-type cytochromes (cytochrome c6 and cytochrome f) at the step of heme attachment. The chain is Cytochrome c biogenesis protein CcsA from Nasturtium officinale (Watercress).